The primary structure comprises 361 residues: Palmitoyltransferase ZDHHC2 (361 aa).

Residues 1 to 15 are Cytoplasmic-facing; sequence MAPSGSRSFDCWRVL. Residues 16-36 form a helical membrane-spanning segment; it reads YWIPVLFISLIVAWSYYAYVV. Residues 37-50 lie on the Lumenal side of the membrane; that stretch reads QLCIETIENMGEKT. The helical transmembrane segment at 51–71 threads the bilayer; the sequence is VYLLIYHLLFLMFVWSYWQTI. Topologically, residues 72–167 are cytoplasmic; sequence YSKPMNPLKE…NNCVGFANYK (96 aa). The DHHC domain occupies 124 to 174; sequence RYCDRCLLLKPDRCHHCSACDMCILKMDHHCPWVNNCVGFANYKFFMLFLA. Catalysis depends on cysteine 154, which acts as the S-palmitoyl cysteine intermediate. Residues 168–188 form a helical membrane-spanning segment; sequence FFMLFLAYSLLYCLFVTATDM. Residues 189–207 are Lumenal-facing; it reads QYFIQFWTNGLPDTQAKFH. Residues 208–228 traverse the membrane as a helical segment; the sequence is IMFLFFAASTFSVSLAFLFAY. Residues 229-361 lie on the Cytoplasmic side of the membrane; that stretch reads HCWLVCKNRS…NPALTIEKET (133 aa). The mediates localization to plasma membrane and recycling endosomes stretch occupies residues 296–361; the sequence is NPDPEQPSIP…NPALTIEKET (66 aa). The span at 299 to 308 shows a compositional bias: pro residues; sequence PEQPSIPPGR. The segment at 299 to 361 is disordered; it reads PEQPSIPPGR…NPALTIEKET (63 aa). The segment covering 331–340 has biased composition (polar residues); the sequence is SRLLNNGQTD. Residues 333 to 334 carry the Non-canonical dileucine endocytic signal motif; that stretch reads LL. The NPxY-like endocytic signal signature appears at 352–355; that stretch reads NPAL.

The protein belongs to the DHHC palmitoyltransferase family. Monomer. Homodimer. The monomeric form has a higher catalytic activity. Post-translationally, autopalmitoylated.

It localises to the endoplasmic reticulum membrane. The protein localises to the golgi apparatus membrane. The protein resides in the postsynaptic density. Its subcellular location is the postsynaptic recycling endosome membrane. It is found in the cell membrane. The catalysed reaction is L-cysteinyl-[protein] + hexadecanoyl-CoA = S-hexadecanoyl-L-cysteinyl-[protein] + CoA. The enzyme catalyses L-cysteinyl-[protein] + tetradecanoyl-CoA = S-tetradecanoyl-L-cysteinyl-[protein] + CoA. It carries out the reaction L-cysteinyl-[protein] + octadecanoyl-CoA = S-octadecanoyl-L-cysteinyl-[protein] + CoA. Its function is as follows. Palmitoyltransferase that catalyzes the addition of palmitate onto various protein substrates and is involved in a variety of cellular processes. Has no stringent fatty acid selectivity and in addition to palmitate can also transfer onto target proteins myristate from tetradecanoyl-CoA and stearate from octadecanoyl-CoA. The protein is Palmitoyltransferase ZDHHC2 of Danio rerio (Zebrafish).